We begin with the raw amino-acid sequence, 303 residues long: ATP synthase gamma chain (303 aa).

This sequence belongs to the ATPase gamma chain family. F-type ATPases have 2 components, CF(1) - the catalytic core - and CF(0) - the membrane proton channel. CF(1) has five subunits: alpha(3), beta(3), gamma(1), delta(1), epsilon(1). CF(0) has three main subunits: a, b and c.

It localises to the cell membrane. Functionally, produces ATP from ADP in the presence of a proton gradient across the membrane. The gamma chain is believed to be important in regulating ATPase activity and the flow of protons through the CF(0) complex. In Nocardioides sp. (strain ATCC BAA-499 / JS614), this protein is ATP synthase gamma chain.